The chain runs to 339 residues: Methionine synthase (339 aa).

3 residues coordinate Zn(2+): His212, Cys214, and Cys295.

The protein belongs to the archaeal MetE family. Requires Zn(2+) as cofactor.

It functions in the pathway amino-acid biosynthesis; L-methionine biosynthesis via de novo pathway. In terms of biological role, catalyzes the transfer of a methyl group to L-homocysteine resulting in methionine formation. The physiological methyl donor is unknown. This chain is Methionine synthase, found in Sulfolobus acidocaldarius (strain ATCC 33909 / DSM 639 / JCM 8929 / NBRC 15157 / NCIMB 11770).